We begin with the raw amino-acid sequence, 462 residues long: Argininosuccinate lyase (462 aa).

The protein belongs to the lyase 1 family. Argininosuccinate lyase subfamily.

It is found in the cytoplasm. The enzyme catalyses 2-(N(omega)-L-arginino)succinate = fumarate + L-arginine. The protein operates within amino-acid biosynthesis; L-arginine biosynthesis; L-arginine from L-ornithine and carbamoyl phosphate: step 3/3. This is Argininosuccinate lyase from Prochlorococcus marinus (strain MIT 9211).